The primary structure comprises 213 residues: UPF0111 protein TM_0914 (213 aa).

This sequence belongs to the UPF0111 family.

This Thermotoga maritima (strain ATCC 43589 / DSM 3109 / JCM 10099 / NBRC 100826 / MSB8) protein is UPF0111 protein TM_0914.